Reading from the N-terminus, the 222-residue chain is Sperm acrosome-associated protein 9 (222 aa).

The disordered stretch occupies residues Gln-164–Leu-222.

As to quaternary structure, microtubule inner protein component of sperm flagellar doublet microtubules. Interacts with CABP1 and CALR. Interacts with INCA1. Interacts with microtubules.

It is found in the cytoplasm. The protein resides in the cytoplasmic vesicle. Its subcellular location is the secretory vesicle. The protein localises to the acrosome. It localises to the cytoskeleton. It is found in the cilium basal body. The protein resides in the flagellum axoneme. Its subcellular location is the cilium axoneme. The protein localises to the nucleus. Its function is as follows. Microtubule inner protein (MIP) part of the dynein-decorated doublet microtubules (DMTs) of multiciliated respiratory cells and the distal singlet microtubules of monoflagellated spermatozoa. Forms an extensive interaction network cross-linking the lumen of axonemal doublet microtubules. The protein is Sperm acrosome-associated protein 9 of Homo sapiens (Human).